The sequence spans 369 residues: Ribonuclease D (369 aa).

The 166-residue stretch at 1–166 (MITTNDALAA…PIAHKLMEQV (166 aa)) folds into the 3'-5' exonuclease domain. The HRDC domain maps to 206–285 (RPRQLACLKL…AQAQALLEDA (80 aa)).

It belongs to the RNase D family. The cofactor is a divalent metal cation.

Its subcellular location is the cytoplasm. It catalyses the reaction Exonucleolytic cleavage that removes extra residues from the 3'-terminus of tRNA to produce 5'-mononucleotides.. Functionally, exonuclease involved in the 3' processing of various precursor tRNAs. Initiates hydrolysis at the 3'-terminus of an RNA molecule and releases 5'-mononucleotides. This chain is Ribonuclease D, found in Cronobacter turicensis (strain DSM 18703 / CCUG 55852 / LMG 23827 / z3032).